A 424-amino-acid chain; its full sequence is MASSNLIKQLQERGLVAQVTDEDALAERLAQGPVALYCGFDPTADSLHLGHLVPLLCLKRFQQAGHKPVALVGGATGLIGDPSFKAAERKLNTEETVQEWVAKIRKQVAPFLDFDCGENSAIAANNYDWFGSMNVLTFLRDIGKHFSVNQMINKEAVKQRLNRDDQGISFTEFSYNLLQGYDFACLNKLHGVALQIGGSDQWGNITSGIDLTRRLHQNQVFGLTVPLITKADGTKFGKTEGGAVWLDPKKTSPYKFYQFWINTADADVYRFLKFFTFMDIEEINALEEEDKNSGKAPRAQYVLAEQVTRLVHGEEGLVAAKRITECLFSGSLSALSEADFEQLAQDGVPMVEMEKGADLMQALVDAELQPSRGQARKTIASNAVTINGEKQSDPEYIFNDEDRLFGRYTLLRRGKKNYCLICWK.

Tyrosine 37 serves as a coordination point for L-tyrosine. The short motif at proline 42 to histidine 51 is the 'HIGH' region element. Residues tyrosine 175 and glutamine 179 each coordinate L-tyrosine. The short motif at lysine 235–threonine 239 is the 'KMSKS' region element. Lysine 238 contributes to the ATP binding site. An S4 RNA-binding domain is found at alanine 357–glycine 414.

This sequence belongs to the class-I aminoacyl-tRNA synthetase family. TyrS type 1 subfamily. In terms of assembly, homodimer.

The protein localises to the cytoplasm. It carries out the reaction tRNA(Tyr) + L-tyrosine + ATP = L-tyrosyl-tRNA(Tyr) + AMP + diphosphate + H(+). In terms of biological role, catalyzes the attachment of tyrosine to tRNA(Tyr) in a two-step reaction: tyrosine is first activated by ATP to form Tyr-AMP and then transferred to the acceptor end of tRNA(Tyr). This Salmonella enteritidis PT4 (strain P125109) protein is Tyrosine--tRNA ligase.